We begin with the raw amino-acid sequence, 333 residues long: Adenosine deaminase (333 aa).

Positions 12 and 14 each coordinate Zn(2+). Substrate contacts are provided by H14, D16, and G170. Zn(2+) is bound at residue H197. Catalysis depends on E200, which acts as the Proton donor. D278 contributes to the Zn(2+) binding site. A substrate-binding site is contributed by D279.

The protein belongs to the metallo-dependent hydrolases superfamily. Adenosine and AMP deaminases family. Adenosine deaminase subfamily. Requires Zn(2+) as cofactor.

It carries out the reaction adenosine + H2O + H(+) = inosine + NH4(+). It catalyses the reaction 2'-deoxyadenosine + H2O + H(+) = 2'-deoxyinosine + NH4(+). In terms of biological role, catalyzes the hydrolytic deamination of adenosine and 2-deoxyadenosine. The chain is Adenosine deaminase from Aliivibrio fischeri (strain MJ11) (Vibrio fischeri).